A 358-amino-acid polypeptide reads, in one-letter code: Fructose-bisphosphate aldolase class 2 (358 aa).

A D-glyceraldehyde 3-phosphate-binding site is contributed by S61. The Proton donor role is filled by D109. Zn(2+) is bound by residues H110, D144, E174, and H226. G227 is a dihydroxyacetone phosphate binding site. Residue H264 coordinates Zn(2+). Dihydroxyacetone phosphate-binding positions include G265–S267 and N286–T289.

This sequence belongs to the class II fructose-bisphosphate aldolase family. Zn(2+) serves as cofactor.

The enzyme catalyses beta-D-fructose 1,6-bisphosphate = D-glyceraldehyde 3-phosphate + dihydroxyacetone phosphate. Its pathway is carbohydrate degradation; glycolysis; D-glyceraldehyde 3-phosphate and glycerone phosphate from D-glucose: step 4/4. In terms of biological role, catalyzes the aldol condensation of dihydroxyacetone phosphate (DHAP or glycerone-phosphate) with glyceraldehyde 3-phosphate (G3P) to form fructose 1,6-bisphosphate (FBP) in gluconeogenesis and the reverse reaction in glycolysis. This is Fructose-bisphosphate aldolase class 2 (fbaA) from Buchnera aphidicola subsp. Acyrthosiphon pisum (strain APS) (Acyrthosiphon pisum symbiotic bacterium).